The following is a 1389-amino-acid chain: DNA-directed RNA polymerase subunit beta'' (1389 aa).

Zn(2+)-binding residues include C224, C295, C302, and C305.

It belongs to the RNA polymerase beta' chain family. RpoC2 subfamily. In terms of assembly, in plastids the minimal PEP RNA polymerase catalytic core is composed of four subunits: alpha, beta, beta', and beta''. When a (nuclear-encoded) sigma factor is associated with the core the holoenzyme is formed, which can initiate transcription. It depends on Zn(2+) as a cofactor.

Its subcellular location is the plastid. It is found in the chloroplast. The enzyme catalyses RNA(n) + a ribonucleoside 5'-triphosphate = RNA(n+1) + diphosphate. Functionally, DNA-dependent RNA polymerase catalyzes the transcription of DNA into RNA using the four ribonucleoside triphosphates as substrates. This is DNA-directed RNA polymerase subunit beta'' from Atropa belladonna (Belladonna).